The following is a 199-amino-acid chain: mRNA export protein mlo3 (199 aa).

A disordered region spans residues 1 to 41 (MSMELDQSLDAIIASKPKGGIRKRRARSNKPKPTKNAKPAV). Residues 19-35 (GGIRKRRARSNKPKPTK) are compositionally biased toward basic residues. One can recognise an RRM domain in the interval 55 to 134 (SKIIVSNLPT…RKMKVEIILD (80 aa)). Positions 144–199 (ARVSPASNASATASKNGAKSSKRKTTRRRRTPNRPKKSAEELDKEMDDYFGSNEKE) are disordered. Over residues 148–161 (PASNASATASKNGA) the composition is skewed to polar residues. Positions 163 to 179 (SSKRKTTRRRRTPNRPK) are enriched in basic residues.

As to quaternary structure, interacts with rpn15/dss1, mex67 and uap56.

The protein resides in the nucleus. In terms of biological role, has a role in the mRNA export process. Interferes with mitotic chromosome segregation when overexpressed. This chain is mRNA export protein mlo3 (mlo3), found in Schizosaccharomyces pombe (strain 972 / ATCC 24843) (Fission yeast).